The chain runs to 293 residues: Ribosomal protein L11 methyltransferase (293 aa).

S-adenosyl-L-methionine is bound by residues T145, G166, D188, and N230.

It belongs to the methyltransferase superfamily. PrmA family.

Its subcellular location is the cytoplasm. It catalyses the reaction L-lysyl-[protein] + 3 S-adenosyl-L-methionine = N(6),N(6),N(6)-trimethyl-L-lysyl-[protein] + 3 S-adenosyl-L-homocysteine + 3 H(+). Functionally, methylates ribosomal protein L11. The chain is Ribosomal protein L11 methyltransferase from Shewanella sediminis (strain HAW-EB3).